Reading from the N-terminus, the 139-residue chain is Actin-depolymerizing factor 1 (139 aa).

The region spanning 5–139 (ASGMAVHDDC…DLDVFRSRAN (135 aa)) is the ADF-H domain. Phosphoserine; by CPK3 is present on S6.

The protein belongs to the actin-binding proteins ADF family. Interacts with the 14-3-3-like protein GRF6/AFT1. Phosphorylation at Ser-6 by CPK3/CDPK6 inhibits actin-depolimerizing activity. In terms of tissue distribution, expressed in vascular tissues of all organs.

Its subcellular location is the cytoplasm. It localises to the cytoskeleton. Functionally, actin-depolymerizing protein. Stimulates F-actin depolymerization. Involved in plant development, cell organ expansion and flowering by controlling breakdown of thick actin cables. Severs actin filaments or bundles and promotes actin cytoskeleton disassembly. Binds monomeric actin (G-actin) with a marked preference for the ADP-loaded form and inhibits the rate of nucleotide exchange on G-actin. The sequence is that of Actin-depolymerizing factor 1 (ADF1) from Arabidopsis thaliana (Mouse-ear cress).